The primary structure comprises 429 residues: SH2 domain-containing protein 5 (429 aa).

The 97-residue stretch at 302 to 398 (WAFAGLSRSC…LSMGRLNPTY (97 aa)) folds into the SH2 domain.

Interacts with BCR. As to expression, highly expressed in brain, particularly in Purkinjie cells in the cerebellum and the cornu ammonis of the hippocampus.

It localises to the postsynaptic density. In terms of biological role, may be involved in synaptic plasticity regulation through the control of Rac-GTP levels. The protein is SH2 domain-containing protein 5 of Mus musculus (Mouse).